The following is a 334-amino-acid chain: Siroheme decarboxylase (334 aa).

The active site involves His93.

It belongs to the Ahb/Nir family.

The enzyme catalyses siroheme + 2 H(+) = 12,18-didecarboxysiroheme + 2 CO2. It participates in porphyrin-containing compound metabolism. Involved in heme d1 biosynthesis. Catalyzes the decarboxylation of siroheme into didecarboxysiroheme. Siroheme is probably decarboxylated to monodecarboxysiroheme, which is in turn decarboxylated to didecarboxysiroheme. The protein is Siroheme decarboxylase of Hydrogenobacter thermophilus (strain DSM 6534 / IAM 12695 / TK-6).